We begin with the raw amino-acid sequence, 773 residues long: C-Maf-inducing protein (773 aa).

Residues 1 to 30 (MDVTSSSGGGGDPRQIEETKPLLGGDVSAP) are disordered. The PH domain maps to 54–163 (LLQEGDIQVC…HSLQWKKKIY (110 aa)). Residues Ser349, Ser377, Ser382, and Ser660 each carry the phosphoserine modification. 4 LRR repeats span residues 663–686 (NLEN…IKLP), 687–707 (SLKQ…RLLS), 712–732 (MLQV…LALS), and 736–756 (SLCS…EDLK).

Interacts with FLNA. Isoform 1 is expressed in peripheral blood mononuclear cells and kidney. Lower expression in brain and liver. Expression is down-regulated in activated cells. Isoform 2 is expressed in lymphocyte precursors, however, expression shuts down during maturation and differentiation in thymus and fetal liver.

Its subcellular location is the nucleus. It localises to the cytoplasm. In terms of biological role, plays a role in T-cell signaling pathway. Isoform 2 may play a role in T-helper 2 (Th2) signaling pathway and seems to represent the first proximal signaling protein that links T-cell receptor-mediated signal to the activation of c-Maf Th2 specific factor. This Homo sapiens (Human) protein is C-Maf-inducing protein (CMIP).